The primary structure comprises 429 residues: 4-hydroxyphenylacetate degradation bifunctional isomerase/decarboxylase (429 aa).

Approximate repeat units follow at residues 1–215 (MKGT…RKSF) and 216–429 (PTLP…ETAK). Glu-276, Glu-278, and Asp-307 together coordinate a divalent metal cation.

This sequence belongs to the FAH family. Monomer. It depends on Mg(2+) as a cofactor.

It carries out the reaction (2E,4Z)-5-hydroxypenta-2,4-diene-1,2,5-tricarboxylate = (3E,5R)-5-carboxy-2-oxohept-3-enedioate. The enzyme catalyses (3E,5R)-5-carboxy-2-oxohept-3-enedioate + H(+) = (4Z)-2-oxohept-4-enedioate + CO2. Its pathway is aromatic compound metabolism; 4-hydroxyphenylacetate degradation; pyruvate and succinate semialdehyde from 4-hydroxyphenylacetate: step 4/7. It participates in aromatic compound metabolism; 4-hydroxyphenylacetate degradation; pyruvate and succinate semialdehyde from 4-hydroxyphenylacetate: step 5/7. Its function is as follows. Decarboxylates OPET (5-oxo-pent-3-ene-1,2,5-tricarboxylic acid) into HHDD (2-hydroxy-hept-2,4-diene-1,7-dioate) and isomerizes it to OHED (2-oxo-hept-3-ene-1,7-dioate). The polypeptide is 4-hydroxyphenylacetate degradation bifunctional isomerase/decarboxylase (hpaG) (Escherichia coli).